A 258-amino-acid polypeptide reads, in one-letter code: uncharacterized protein (258 aa).

Belongs to the IIV-6 219L family.

This is an uncharacterized protein from Aedes vexans (Inland floodwater mosquito).